A 699-amino-acid polypeptide reads, in one-letter code: D-(-)-3-hydroxybutyrate oligomer hydrolase (699 aa).

An N-terminal signal peptide occupies residues 1–33 (MTAIRGGSRRAPGLALALLGGVLLGACHGDENA). The Charge relay system role is filled by serine 311.

This sequence belongs to the D-(-)-3-hydroxybutyrate oligomer hydrolase family.

The protein resides in the secreted. It catalyses the reaction (3R)-hydroxybutanoate dimer + H2O = 2 (R)-3-hydroxybutanoate + H(+). It participates in lipid metabolism; butanoate metabolism. In terms of biological role, participates in the degradation of poly-3-hydroxybutyrate (PHB). It works downstream of poly(3-hydroxybutyrate) depolymerase, hydrolyzing D(-)-3-hydroxybutyrate oligomers of various length (3HB-oligomers) into 3HB-monomers. The sequence is that of D-(-)-3-hydroxybutyrate oligomer hydrolase from Burkholderia pseudomallei (strain 1710b).